Reading from the N-terminus, the 249-residue chain is Pyridoxine 5'-phosphate synthase (249 aa).

3-amino-2-oxopropyl phosphate is bound at residue Asn-12. 14–15 (DH) serves as a coordination point for 1-deoxy-D-xylulose 5-phosphate. Residue Arg-23 participates in 3-amino-2-oxopropyl phosphate binding. The Proton acceptor role is filled by His-48. 1-deoxy-D-xylulose 5-phosphate-binding residues include Arg-50 and His-55. Glu-75 serves as the catalytic Proton acceptor. Residue Thr-105 participates in 1-deoxy-D-xylulose 5-phosphate binding. The active-site Proton donor is His-199. Residues Gly-200 and 221–222 (GH) each bind 3-amino-2-oxopropyl phosphate.

This sequence belongs to the PNP synthase family. In terms of assembly, homooctamer; tetramer of dimers.

The protein localises to the cytoplasm. It carries out the reaction 3-amino-2-oxopropyl phosphate + 1-deoxy-D-xylulose 5-phosphate = pyridoxine 5'-phosphate + phosphate + 2 H2O + H(+). Its pathway is cofactor biosynthesis; pyridoxine 5'-phosphate biosynthesis; pyridoxine 5'-phosphate from D-erythrose 4-phosphate: step 5/5. Its function is as follows. Catalyzes the complicated ring closure reaction between the two acyclic compounds 1-deoxy-D-xylulose-5-phosphate (DXP) and 3-amino-2-oxopropyl phosphate (1-amino-acetone-3-phosphate or AAP) to form pyridoxine 5'-phosphate (PNP) and inorganic phosphate. The chain is Pyridoxine 5'-phosphate synthase from Roseobacter denitrificans (strain ATCC 33942 / OCh 114) (Erythrobacter sp. (strain OCh 114)).